Here is a 369-residue protein sequence, read N- to C-terminus: Molybdenum import ATP-binding protein ModC (369 aa).

In terms of domain architecture, ABC transporter spans threonine 3–serine 246. Residue glycine 44–threonine 51 participates in ATP binding. One can recognise a Mop domain in the interval aspartate 305–glycine 369.

Belongs to the ABC transporter superfamily. Molybdate importer (TC 3.A.1.8) family. As to quaternary structure, the complex is composed of two ATP-binding proteins (ModC), two transmembrane proteins (ModB) and a solute-binding protein (ModA).

The protein resides in the cell inner membrane. The enzyme catalyses molybdate(out) + ATP + H2O = molybdate(in) + ADP + phosphate + H(+). Functionally, part of the ABC transporter complex ModABC involved in molybdenum import. Responsible for energy coupling to the transport system. This is Molybdenum import ATP-binding protein ModC from Albidiferax ferrireducens (strain ATCC BAA-621 / DSM 15236 / T118) (Rhodoferax ferrireducens).